The sequence spans 204 residues: Guanylate kinase (204 aa).

The Guanylate kinase-like domain maps to 5-184; that stretch reads GLLLVLSGPS…AVDHIKAIVD (180 aa). ATP is bound at residue 12–19; that stretch reads GPSGVGKG.

It belongs to the guanylate kinase family.

The protein localises to the cytoplasm. It carries out the reaction GMP + ATP = GDP + ADP. Essential for recycling GMP and indirectly, cGMP. This Lactobacillus acidophilus (strain ATCC 700396 / NCK56 / N2 / NCFM) protein is Guanylate kinase.